Here is a 653-residue protein sequence, read N- to C-terminus: Fructose-1,6-bisphosphatase class 3 (653 aa).

It belongs to the FBPase class 3 family. Mn(2+) is required as a cofactor.

It carries out the reaction beta-D-fructose 1,6-bisphosphate + H2O = beta-D-fructose 6-phosphate + phosphate. It functions in the pathway carbohydrate biosynthesis; gluconeogenesis. In Listeria monocytogenes serovar 1/2a (strain ATCC BAA-679 / EGD-e), this protein is Fructose-1,6-bisphosphatase class 3.